The sequence spans 116 residues: U11-theraphotoxin-Hhn1b (116 aa).

Residues M1 to A21 form the signal peptide. A propeptide spanning residues D22–R74 is cleaved from the precursor. Positions L60 to N69 are enriched in basic and acidic residues. Residues L60–D83 form a disordered region. 3 cysteine pairs are disulfide-bonded: C75–C90, C82–C95, and C89–C110.

It belongs to the neurotoxin 14 (magi-1) family. 01 (HNTX-16) subfamily. Expressed by the venom gland.

The protein localises to the secreted. Functionally, probable ion channel inhibitor. In Cyriopagopus hainanus (Chinese bird spider), this protein is U11-theraphotoxin-Hhn1b.